The primary structure comprises 114 residues: PDZK1-interacting protein 1 (114 aa).

The Extracellular segment spans residues 1–28 (MSALSLVILGLLMAVPPASCQQGLGNLQ). Residues 29–51 (PWMQGLIAVAVFLVLVAIAFAIN) traverse the membrane as a helical segment. The Cytoplasmic portion of the chain corresponds to 52–114 (HFWCQEEREP…EEGRVHSTPM (63 aa)). Ser-85 is modified (phosphoserine). Residues 92–114 (SNEHENAYENTSEEEGRVHSTPM) are disordered. Basic and acidic residues predominate over residues 105–114 (EEGRVHSTPM).

It belongs to the PDZK1-interacting protein 1/SMIM24 family. In terms of assembly, forms a heterodimer (via N-terminal transmembrane helix) with SLC5A2/SGLT2 (via TM13); this interaction enhances SLC5A2 transporter activity. Interacts with PDZK1.

It localises to the apical cell membrane. Its function is as follows. Auxiliary protein of electrogenic Na(+)-coupled sugar symporter SLC5A2/SGLT2 and SLC5A1/SGLT1. Essential for the transporter activity of SLC5A2/SGLT2 but not SLC5A1/SGLT1. The polypeptide is PDZK1-interacting protein 1 (Sus scrofa (Pig)).